The following is a 519-amino-acid chain: AarF domain-containing protein kinase 1 (519 aa).

Positions 145–481 (SFEDTPLGAA…SLYRRVHISL (337 aa)) constitute a Protein kinase domain. ATP-binding positions include 151-159 (LGAASLAQV) and Lys-173. The Proton acceptor role is filled by Asp-305.

The protein belongs to the protein kinase superfamily. ADCK protein kinase family.

Its subcellular location is the mitochondrion. Appears to be essential for maintaining mitochondrial cristae formation and mitochondrial function by acting via YME1L1 in a kinase-independent manner to regulate essential mitochondrial structural proteins OPA1 and IMMT. The action of this enzyme is not yet clear. It is not known if it has protein kinase activity and what type of substrate it would phosphorylate (Ser, Thr or Tyr). This Gallus gallus (Chicken) protein is AarF domain-containing protein kinase 1 (ADCK1).